We begin with the raw amino-acid sequence, 449 residues long: Probable aminotransferase TAT1 (449 aa).

The span at 1-12 (MNHNSNLVLPSH) shows a compositional bias: polar residues. Positions 1–20 (MNHNSNLVLPSHQTETQTQD) are disordered.

Belongs to the class-I pyridoxal-phosphate-dependent aminotransferase family. It depends on pyridoxal 5'-phosphate as a cofactor.

The sequence is that of Probable aminotransferase TAT1 from Arabidopsis thaliana (Mouse-ear cress).